Reading from the N-terminus, the 254-residue chain is MANLGYWLLALFVTTCTDVGLCKKRPKPGGWNTGGSRYPGQGSPGGNRYPPQSGGTWGQPHGGGWGQPHGGGWGQPHGGGWGQPHGGGWSQGGGTHNQWNKPSKPKTNLKHVAGAAAAGAVVGGLGGYMLGSAMSRPMLHFGNDWEDRYYRENMYRYPNQVYYRPVDQYSNQNNFVHDCVNITIKQHTVTTTTKGENFTETDVKMMERVVEQMCVTQYQKESQAYYDGRRSSAVLFSSPPVILLISFLIFLIVG.

Positions 1 to 28 (MANLGYWLLALFVTTCTDVGLCKKRPKP) are cleaved as a signal peptide. The segment at 23 to 38 (KKRPKPGGWNTGGSRY) is interaction with ADGRG6. Positions 23–231 (KKRPKPGGWN…SQAYYDGRRS (209 aa)) are interaction with GRB2, ERI3 and SYN1. The segment at 24–107 (KRPKPGGWNT…QWNKPSKPKT (84 aa)) is disordered. A run of 5 repeats spans residues 51 to 59 (PQSGGTWGQ), 60 to 67 (PHGGGWGQ), 68 to 75 (PHGGGWGQ), 76 to 83 (PHGGGWGQ), and 84 to 91 (PHGGGWSQ). The segment at 51–91 (PQSGGTWGQPHGGGWGQPHGGGWGQPHGGGWGQPHGGGWSQ) is 5 X 8 AA tandem repeats of P-H-G-G-G-W-G-Q. The span at 55-95 (GTWGQPHGGGWGQPHGGGWGQPHGGGWGQPHGGGWSQGGGT) shows a compositional bias: gly residues. Residues His61, Gly62, Gly63, His69, Gly70, Gly71, His77, Gly78, Gly79, His85, Gly86, and Gly87 each contribute to the Cu(2+) site. Cys179 and Cys214 are oxidised to a cystine. Asn181 and Asn197 each carry an N-linked (GlcNAc...) asparagine glycan. Ser231 is lipidated: GPI-anchor amidated serine. A propeptide spans 232-254 (SAVLFSSPPVILLISFLIFLIVG) (removed in mature form).

It belongs to the prion family. Monomer and homodimer. Has a tendency to aggregate into amyloid fibrils containing a cross-beta spine, formed by a steric zipper of superposed beta-strands. Soluble oligomers may represent an intermediate stage on the path to fibril formation. Copper binding may promote oligomerization. Interacts with GRB2, APP, ERI3/PRNPIP and SYN1. Mislocalized cytosolically exposed PrP interacts with MGRN1; this interaction alters MGRN1 subcellular location and causes lysosomal enlargement. Interacts with APP. Interacts with KIAA1191. Interacts with ADGRG6.

It is found in the cell membrane. The protein localises to the golgi apparatus. Its primary physiological function is unclear. May play a role in neuronal development and synaptic plasticity. May be required for neuronal myelin sheath maintenance. May promote myelin homeostasis through acting as an agonist for ADGRG6 receptor. May play a role in iron uptake and iron homeostasis. Soluble oligomers are toxic to cultured neuroblastoma cells and induce apoptosis (in vitro). Association with GPC1 (via its heparan sulfate chains) targets PRNP to lipid rafts. Also provides Cu(2+) or Zn(2+) for the ascorbate-mediated GPC1 deaminase degradation of its heparan sulfate side chains. This is Major prion protein (Prnp) from Rattus norvegicus (Rat).